The sequence spans 425 residues: Non-structural protein 2 (425 aa).

A coiled-coil region spans residues 29-64 (VSFDELVALREENAKLKQENEALKAKLHRLESDWTT).

The sequence is that of Non-structural protein 2 (Segment-6) from Banna virus (BAV).